The sequence spans 398 residues: L-rhamnonate dehydratase (398 aa).

Residues His-22 and Arg-48 each coordinate substrate. The Mg(2+) site is built by Asp-214, Glu-241, and Glu-269. The active-site Proton acceptor is the His-319. Glu-339 provides a ligand contact to substrate.

Belongs to the mandelate racemase/muconate lactonizing enzyme family. RhamD subfamily. Homooctamer; tetramer of dimers. Mg(2+) is required as a cofactor.

It carries out the reaction L-rhamnonate = 2-dehydro-3-deoxy-L-rhamnonate + H2O. In terms of biological role, catalyzes the dehydration of L-rhamnonate to 2-keto-3-deoxy-L-rhamnonate (KDR). This Verminephrobacter eiseniae (strain EF01-2) protein is L-rhamnonate dehydratase.